The following is a 272-amino-acid chain: Zinc finger protein 32 (272 aa).

A compositionally biased stretch (basic and acidic residues) spans 50-65 (RREKLEQKSPESKALQ). Residues 50–69 (RREKLEQKSPESKALQEDSP) form a disordered region. C2H2-type zinc fingers lie at residues 76-98 (YDCQ…ERIH), 104-126 (FECT…QRIH), and 132-154 (YQCK…ERLH). 20 residues coordinate Zn(2+): cysteine 78, cysteine 81, histidine 94, histidine 98, cysteine 106, cysteine 109, histidine 122, histidine 126, serine 140, glutamine 143, glycine 156, tyrosine 160, phenylalanine 197, lysine 200, leucine 213, alanine 217, cysteine 246, cysteine 249, histidine 262, and cysteine 266. 2 C2H2-type zinc fingers span residues 160–182 (YECA…RRVH) and 188–210 (YRCD…IRVH). A C2H2-type 6 zinc finger spans residues 216–238 (YACSHCRKSFHTRGNCLLHGKVH). Residues 244-266 (YLCGQCGKSFTQRGSLAVHQRSC) form a CCHC-type zinc finger.

This sequence belongs to the krueppel C2H2-type zinc-finger protein family.

Its subcellular location is the nucleus. Functionally, may be involved in transcriptional regulation. The chain is Zinc finger protein 32 (Znf32) from Mus musculus (Mouse).